We begin with the raw amino-acid sequence, 99 residues long: Large ribosomal subunit protein uL23 (99 aa).

It belongs to the universal ribosomal protein uL23 family. In terms of assembly, part of the 50S ribosomal subunit. Contacts protein L29, and trigger factor when it is bound to the ribosome.

One of the early assembly proteins it binds 23S rRNA. One of the proteins that surrounds the polypeptide exit tunnel on the outside of the ribosome. Forms the main docking site for trigger factor binding to the ribosome. This chain is Large ribosomal subunit protein uL23, found in Lachnospira eligens (strain ATCC 27750 / DSM 3376 / VPI C15-48 / C15-B4) (Eubacterium eligens).